The primary structure comprises 350 residues: uncharacterized protein (350 aa).

The OBG-type G domain occupies 171 to 334 (PTVVIAGYPN…LKERLKKIAI (164 aa)). GTP contacts are provided by residues 177 to 184 (GYPNVGKS), 219 to 223 (DTPGL), and 286 to 289 (NKID).

Belongs to the TRAFAC class OBG-HflX-like GTPase superfamily. OBG GTPase family. NOG subfamily.

This is an uncharacterized protein from Methanocaldococcus jannaschii (strain ATCC 43067 / DSM 2661 / JAL-1 / JCM 10045 / NBRC 100440) (Methanococcus jannaschii).